A 257-amino-acid chain; its full sequence is GTP cyclohydrolase 1 type 2 homolog (257 aa).

4 residues coordinate a divalent metal cation: His-65, Asp-103, His-221, and Glu-224.

Belongs to the GTP cyclohydrolase I type 2/NIF3 family. In terms of assembly, homohexamer.

The chain is GTP cyclohydrolase 1 type 2 homolog (ykiD) from Lactococcus lactis subsp. lactis (strain IL1403) (Streptococcus lactis).